A 317-amino-acid polypeptide reads, in one-letter code: Ribosomal RNA small subunit methyltransferase H (317 aa).

Residues 37 to 39 (AGH), aspartate 56, phenylalanine 85, aspartate 106, and glutamine 113 each bind S-adenosyl-L-methionine.

This sequence belongs to the methyltransferase superfamily. RsmH family.

The protein localises to the cytoplasm. It catalyses the reaction cytidine(1402) in 16S rRNA + S-adenosyl-L-methionine = N(4)-methylcytidine(1402) in 16S rRNA + S-adenosyl-L-homocysteine + H(+). Specifically methylates the N4 position of cytidine in position 1402 (C1402) of 16S rRNA. This is Ribosomal RNA small subunit methyltransferase H from Lactococcus lactis subsp. lactis (strain IL1403) (Streptococcus lactis).